The sequence spans 378 residues: METTPKRSKTLLMSNGEERRSMTFGIEMLPDDLVLSCLARVPRMYYPILSLVSKRFRSFLTSTELYQTRNLLGSTESFLFVCLRIVNDSNPLRLFTLCRRPNSLTKVMVPILSPDSIPKFLPDVVLVGSNIYVIGGLINNNASHKVMVMDCRSHTWREAQGTCVARVSPSACVLDGKIYVAGGCKNLDATMWMEVFDTKTESWEFVSSPGEEICRDLTSCESIGYDGNVYVESMKTYGLYELHKGRWREGQYSMSRGGSLSSQCVIDNVLYRSWSYMVEWYDSENKLWNSLKGLEKLFIVTNQYVPTKCVNYGGKLAVFWLEKVYAKHLHQETKIWCAVITIERRKKEEIWGTREWFDLVFTTNEEMVDLTHVFAATL.

Positions 23 to 69 (TFGIEMLPDDLVLSCLARVPRMYYPILSLVSKRFRSFLTSTELYQTR) constitute an F-box domain. Kelch repeat units lie at residues 130-176 (NIYV…VLDG), 178-227 (IYVA…GYDG), and 262-308 (SQCV…VPTK).

This chain is Putative F-box/kelch-repeat protein At3g43710, found in Arabidopsis thaliana (Mouse-ear cress).